Reading from the N-terminus, the 408-residue chain is Cell division protein FtsZ 2 (408 aa).

Residues 130–132 (GTG), E169, R173, and D216 each bind GTP.

Belongs to the FtsZ family. Homodimer. Polymerizes to form a dynamic ring structure in a strictly GTP-dependent manner. Interacts directly with several other division proteins.

It localises to the cytoplasm. Essential cell division protein that forms a contractile ring structure (Z ring) at the future cell division site. The regulation of the ring assembly controls the timing and the location of cell division. One of the functions of the FtsZ ring is to recruit other cell division proteins to the septum to produce a new cell wall between the dividing cells. Binds GTP and shows GTPase activity. The sequence is that of Cell division protein FtsZ 2 from Pyrococcus furiosus (strain ATCC 43587 / DSM 3638 / JCM 8422 / Vc1).